The chain runs to 386 residues: Mannitol-1-phosphate 5-dehydrogenase (386 aa).

Position 3–14 (3–14) interacts with NAD(+); it reads AVHFGAGNIGRG.

Belongs to the mannitol dehydrogenase family.

It catalyses the reaction D-mannitol 1-phosphate + NAD(+) = beta-D-fructose 6-phosphate + NADH + H(+). This Brevibacillus brevis (strain 47 / JCM 6285 / NBRC 100599) protein is Mannitol-1-phosphate 5-dehydrogenase.